A 227-amino-acid polypeptide reads, in one-letter code: 2-phospho-L-lactate guanylyltransferase (227 aa).

The protein belongs to the CofC family. Homodimer.

The enzyme catalyses (2S)-2-phospholactate + GTP + H(+) = (2S)-lactyl-2-diphospho-5'-guanosine + diphosphate. Its pathway is cofactor biosynthesis; coenzyme F420 biosynthesis. Functionally, guanylyltransferase that catalyzes the activation of (2S)-2-phospholactate (2-PL) as (2S)-lactyl-2-diphospho-5'-guanosine, via the condensation of 2-PL with GTP. It is involved in the biosynthesis of coenzyme F420, a hydride carrier cofactor. The protein is 2-phospho-L-lactate guanylyltransferase of Methanocaldococcus sp. (strain FS406-22).